The sequence spans 445 residues: Glutamyl-tRNA reductase (445 aa).

Residues 49–52 (TCNR), Ser-109, 114–116 (ETQ), and Gln-120 each bind substrate. Cys-50 (nucleophile) is an active-site residue. 189–194 (GAGEMS) contributes to the NADP(+) binding site.

Belongs to the glutamyl-tRNA reductase family. In terms of assembly, homodimer.

The enzyme catalyses (S)-4-amino-5-oxopentanoate + tRNA(Glu) + NADP(+) = L-glutamyl-tRNA(Glu) + NADPH + H(+). It functions in the pathway porphyrin-containing compound metabolism; protoporphyrin-IX biosynthesis; 5-aminolevulinate from L-glutamyl-tRNA(Glu): step 1/2. Its function is as follows. Catalyzes the NADPH-dependent reduction of glutamyl-tRNA(Glu) to glutamate 1-semialdehyde (GSA). This chain is Glutamyl-tRNA reductase, found in Staphylococcus carnosus (strain TM300).